The primary structure comprises 308 residues: Ribosomal RNA large subunit methyltransferase F (308 aa).

Belongs to the methyltransferase superfamily. METTL16/RlmF family.

It is found in the cytoplasm. It carries out the reaction adenosine(1618) in 23S rRNA + S-adenosyl-L-methionine = N(6)-methyladenosine(1618) in 23S rRNA + S-adenosyl-L-homocysteine + H(+). Functionally, specifically methylates the adenine in position 1618 of 23S rRNA. In Salmonella paratyphi A (strain ATCC 9150 / SARB42), this protein is Ribosomal RNA large subunit methyltransferase F.